The primary structure comprises 543 residues: Ribonuclease Y (543 aa).

The chain crosses the membrane as a helical span at residues 4-24 (IIMIPVATAIVSLLVGTVTGY). The KH domain occupies 233 to 296 (TVSVVDLPNE…EIAKRAMERL (64 aa)). An HD domain is found at 359-452 (VLSHSIEVGK…VVAADTISSA (94 aa)).

It belongs to the RNase Y family.

The protein resides in the cell membrane. Endoribonuclease that initiates mRNA decay. This is Ribonuclease Y from Lactobacillus acidophilus (strain ATCC 700396 / NCK56 / N2 / NCFM).